Consider the following 218-residue polypeptide: MEMALPRKYDRVTGRILTHKNNQMCTTECSQMYNLHNPITFELGLGNVFVCMRCLTVHHCDMQTDCTIVNTHEGYVCAKTGLFYSGWMPTYADCFLEPICEPNIETVNVVVVLLSYVYSFLMENKERYAAIIDSIIKDGKFIKNVEDAVFYTFNAVFTNSTFNKIPLTTISRLFVQLIIGGHAKGTIYDSNVIRVSRRKREDSLLKKMRLEYGNALIL.

It belongs to the herpesviridae UL92 family.

In Homo sapiens (Human), this protein is Protein U63 (U63).